A 265-amino-acid chain; its full sequence is Methyl-coenzyme M reductase II subunit gamma (265 aa).

Arginine 123 contacts coenzyme M.

The protein belongs to the methyl-coenzyme M reductase gamma subunit family. In terms of assembly, MCR is a hexamer of two alpha, two beta, and two gamma chains, forming a dimer of heterotrimers. It depends on coenzyme F430 as a cofactor.

The catalysed reaction is coenzyme B + methyl-coenzyme M = methane + coenzyme M-coenzyme B heterodisulfide. The protein operates within one-carbon metabolism; methyl-coenzyme M reduction; methane from methyl-coenzyme M: step 1/1. Component of the methyl-coenzyme M reductase (MCR) I that catalyzes the reductive cleavage of methyl-coenzyme M (CoM-S-CH3 or 2-(methylthio)ethanesulfonate) using coenzyme B (CoB or 7-mercaptoheptanoylthreonine phosphate) as reductant which results in the production of methane and the mixed heterodisulfide of CoB and CoM (CoM-S-S-CoB). This is the final step in methanogenesis. This Methanothermobacter thermautotrophicus (strain ATCC 29096 / DSM 1053 / JCM 10044 / NBRC 100330 / Delta H) (Methanobacterium thermoautotrophicum) protein is Methyl-coenzyme M reductase II subunit gamma (mrtG).